The chain runs to 208 residues: Uracil phosphoribosyltransferase (208 aa).

Residues Arg78, Arg103, and Asp130–Ser138 each bind 5-phospho-alpha-D-ribose 1-diphosphate. Residues Ile193 and Gly198–Ala200 contribute to the uracil site. Asp199 lines the 5-phospho-alpha-D-ribose 1-diphosphate pocket.

This sequence belongs to the UPRTase family. It depends on Mg(2+) as a cofactor.

The catalysed reaction is UMP + diphosphate = 5-phospho-alpha-D-ribose 1-diphosphate + uracil. The protein operates within pyrimidine metabolism; UMP biosynthesis via salvage pathway; UMP from uracil: step 1/1. With respect to regulation, allosterically activated by GTP. In terms of biological role, catalyzes the conversion of uracil and 5-phospho-alpha-D-ribose 1-diphosphate (PRPP) to UMP and diphosphate. This Pelobacter propionicus (strain DSM 2379 / NBRC 103807 / OttBd1) protein is Uracil phosphoribosyltransferase.